We begin with the raw amino-acid sequence, 3133 residues long: Cysteine repeat modular protein A (3133 aa).

The segment at 1–39 (MDSASTSMSRVHPSGVYRRPLLPSGGPRSTSERDERVDL) is disordered. Residues 30-39 (TSERDERVDL) show a composition bias toward basic and acidic residues. A helical transmembrane segment spans residues 123 to 143 (LFLLFSSSPLLLLLLLHQFFI). 2 stretches are compositionally biased toward basic and acidic residues: residues 173 to 211 (TFEEREADSHRGSRDGEKVSGSRDIRFEEQEIRSRDGKE) and 301 to 311 (NESEKAERARL). 2 disordered regions span residues 173–234 (TFEE…EGRR) and 294–317 (VSPSHSGNESEKAERARLEQSTPA). N-linked (GlcNAc...) asparagine glycans are attached at residues N301, N392, and N470. Residues 577–644 (DETLEQGKLY…DPHVRFDFCD (68 aa)) form the Kringle domain. 2 disulfides stabilise this stretch: C599–C631 and C620–C643. N-linked (GlcNAc...) asparagine glycans are attached at residues N1364 and N1532. 3 helical membrane passes run 2229 to 2249 (MVWNIVCLMGYYLATLLFNIV), 2276 to 2296 (LTGISVLSVIDFSTIAFPSWI), and 2339 to 2359 (VFYALIPIALPIVATIIMSII). An N-linked (GlcNAc...) asparagine glycan is attached at N2369. Helical transmembrane passes span 2420-2440 (AAKFMEDMIPIYVTVLFFVYS), 2489-2509 (VGITGLLVWSIGIPLSCFLVL), and 2539-2559 (WEMVVFARKFLVIVVSSVALI). N-linked (GlcNAc...) asparagine glycosylation is present at N2565. Residues 2569–2589 (VWLAVVIAVIFLIIHLVTQPF) form a helical membrane-spanning segment. N2602 is a glycosylation site (N-linked (GlcNAc...) asparagine). Transmembrane regions (helical) follow at residues 2607 to 2627 (IWTITLIVLAMMIGSDFSGSV) and 2632 to 2652 (LLFVAVLSCMFILEVGVSLMF). 2 stretches are compositionally biased toward basic and acidic residues: residues 2827-2838 (FAAKDETPTAEE) and 3049-3069 (QEENARRKLEKEEREEADREI). 2 disordered regions span residues 2827–2847 (FAAKDETPTAEEKTEEQDERL) and 3049–3101 (QEEN…LPEG). The stretch at 2955–3068 (SEALQKRNRK…KEEREEADRE (114 aa)) forms a coiled coil. Positions 3083–3094 (GEDDTATIDDSS) are enriched in acidic residues.

Component of a complex, at least composed of cysteine repeat modular protein A (CRMPa), cysteine repeat modular protein B (CRMPb), micronemal protein 15 (MIC15) and thrombospondin type 1 domain-containing protein (TSP1).

The protein localises to the cell membrane. Its subcellular location is the endoplasmic reticulum. The protein resides in the golgi apparatus. Functionally, required for triggering rhoptry secretion. Plays a role in host cell invasion. The polypeptide is Cysteine repeat modular protein A (Toxoplasma gondii).